The primary structure comprises 757 residues: 5-methyltetrahydropteroyltriglutamate--homocysteine methyltransferase (757 aa).

Residues 17 to 20 and K117 contribute to the 5-methyltetrahydropteroyltri-L-glutamate site; that span reads RELK. L-homocysteine contacts are provided by residues 432–434 and E485; that span reads IGS. L-methionine contacts are provided by residues 432 to 434 and E485; that span reads IGS. 5-methyltetrahydropteroyltri-L-glutamate-binding positions include 516–517 and W562; that span reads RC. Position 600 (D600) interacts with L-homocysteine. Position 600 (D600) interacts with L-methionine. Residue E606 participates in 5-methyltetrahydropteroyltri-L-glutamate binding. Residues H642, C644, and E666 each coordinate Zn(2+). Residue H695 is the Proton donor of the active site. A Zn(2+)-binding site is contributed by C727.

Belongs to the vitamin-B12 independent methionine synthase family. Requires Zn(2+) as cofactor.

It catalyses the reaction 5-methyltetrahydropteroyltri-L-glutamate + L-homocysteine = tetrahydropteroyltri-L-glutamate + L-methionine. It participates in amino-acid biosynthesis; L-methionine biosynthesis via de novo pathway; L-methionine from L-homocysteine (MetE route): step 1/1. Its function is as follows. Catalyzes the transfer of a methyl group from 5-methyltetrahydrofolate to homocysteine resulting in methionine formation. The sequence is that of 5-methyltetrahydropteroyltriglutamate--homocysteine methyltransferase from Erwinia tasmaniensis (strain DSM 17950 / CFBP 7177 / CIP 109463 / NCPPB 4357 / Et1/99).